The primary structure comprises 121 residues: uncharacterized protein (121 aa).

This is an uncharacterized protein from Bacillus subtilis (strain 168).